Here is a 574-residue protein sequence, read N- to C-terminus: Septation ring formation regulator EzrA (574 aa).

The Extracellular portion of the chain corresponds to 1-7 (MSSGIIL). Residues 8 to 26 (LIVAIVLLVIIAYLVGVII) traverse the membrane as a helical segment. Over 27-574 (RKRNDSLITS…YEKTREHIRF (548 aa)) the chain is Cytoplasmic. 3 coiled-coil regions span residues 102-141 (NFIRAKHEINSVESQLNLVEEDIASIREALNILKEQEEKN), 274-350 (ELVT…ETES), and 459-520 (QLEA…SFEA).

The protein belongs to the EzrA family.

The protein localises to the cell membrane. In terms of biological role, negative regulator of FtsZ ring formation; modulates the frequency and position of FtsZ ring formation. Inhibits FtsZ ring formation at polar sites. Interacts either with FtsZ or with one of its binding partners to promote depolymerization. The polypeptide is Septation ring formation regulator EzrA (Streptococcus pyogenes serotype M4 (strain MGAS10750)).